We begin with the raw amino-acid sequence, 147 residues long: uncharacterized protein (147 aa).

A CMP/dCMP-type deaminase domain is found at 4-120 (KWAKRFFQMA…EQTEDFLSRW (117 aa)). H67 contributes to the Zn(2+) binding site. The Proton donor role is filled by E69. Residues C92 and C95 each contribute to the Zn(2+) site.

It belongs to the cytidine and deoxycytidylate deaminase family. The cofactor is Zn(2+).

This is an uncharacterized protein from Aliivibrio fischeri (Vibrio fischeri).